The following is a 363-amino-acid chain: Probable protein phosphatase 2C member 13, mitochondrial (363 aa).

The N-terminal 59 residues, 1 to 59 (MVCFASLRRALPLLLRATTTTTPRFLLPRALSGGVGGGAAVDARALLRGHSGWRGLRVA), are a transit peptide targeting the mitochondrion. The region spanning 111-357 (KCGYSSFRGK…DNITCIVVQF (247 aa)) is the PPM-type phosphatase domain. Aspartate 147, glycine 148, aspartate 309, and aspartate 348 together coordinate Mn(2+).

This sequence belongs to the PP2C family. Mg(2+) serves as cofactor. Requires Mn(2+) as cofactor. Highly expressed in mature pollen grains.

It localises to the mitochondrion. It carries out the reaction O-phospho-L-seryl-[protein] + H2O = L-seryl-[protein] + phosphate. It catalyses the reaction O-phospho-L-threonyl-[protein] + H2O = L-threonyl-[protein] + phosphate. In terms of biological role, probable protein phosphatase that may play a role as a mitochondrial signal transduction mediator in pollen germination. May function in retrograde signaling from the mitochondria to the nucleus. May be a downstream factor of cytoplasmic male sterility (CMS). CMS is caused by genetic incompatibility between nuclei and mitochondria within male reproductive organs. The chain is Probable protein phosphatase 2C member 13, mitochondrial from Oryza sativa subsp. japonica (Rice).